The sequence spans 126 residues: Large ribosomal subunit protein bL19 (126 aa).

This sequence belongs to the bacterial ribosomal protein bL19 family.

In terms of biological role, this protein is located at the 30S-50S ribosomal subunit interface and may play a role in the structure and function of the aminoacyl-tRNA binding site. The sequence is that of Large ribosomal subunit protein bL19 from Bradyrhizobium diazoefficiens (strain JCM 10833 / BCRC 13528 / IAM 13628 / NBRC 14792 / USDA 110).